The sequence spans 752 residues: Mitochondrial Rho GTPase 1 (752 aa).

The Cytoplasmic segment spans residues 1-671 (MRKDVRIVLA…RNALSYGTNR (671 aa)). Residues 2 to 170 (RKDVRIVLAG…FYFAQKAVLY (169 aa)) form the Miro 1 domain. GTP is bound by residues 11-18 (GDPDVGKS), 57-61 (DTSSS), and 115-118 (NKID). 2 consecutive EF-hand domains span residues 186–221 (ACVDALKRIFRLCDSDKDGLLSDGELNDFQRKCFDT) and 333–368 (NGYQFLTDIFEVHDKDRDGALSEEELDSLFITAPDN). The Ca(2+) site is built by aspartate 199, aspartate 201, aspartate 203, glutamate 210, aspartate 346, aspartate 348, aspartate 350, and glutamate 357. The segment at 426–460 (SSGSASTPAPIPLTPTGPPGSRPSRNRTPCPPSTI) is disordered. Positions 434–446 (APIPLTPTGPPGS) are enriched in pro residues. The region spanning 481–651 (RSVFLGFVLG…YGLICTIAVD (171 aa)) is the Miro 2 domain. GTP contacts are provided by residues 490–497 (GAAGSGKT), 526–530 (EQAGA), and 595–598 (TKAD). The helical; Anchor for type IV membrane protein transmembrane segment at 672-692 (WQFWGYIGLVVIGGGGAVWIC) threads the bilayer. The Mitochondrial intermembrane portion of the chain corresponds to 693 to 752 (AKVLKVPIGSTLGFGSSASTTSWWLSGAQARGAGGPNATKVSSWFDWIRWQSSSNVRSEL).

Belongs to the mitochondrial Rho GTPase family.

Its subcellular location is the mitochondrion outer membrane. Its function is as follows. Mitochondrial GTPase involved in mitochondrial trafficking. Probably involved in control of anterograde transport of mitochondria and their subcellular distribution. The protein is Mitochondrial Rho GTPase 1 (GEM1) of Mycosarcoma maydis (Corn smut fungus).